The following is a 337-amino-acid chain: Cytoskeleton protein RodZ (337 aa).

At methionine 1–glycine 111 the chain is on the cytoplasmic side. Residues leucine 19 to leucine 71 enclose the HTH cro/C1-type domain. A DNA-binding region (H-T-H motif) is located at residues glutamine 30–glutamate 49. Residues tryptophan 112–tryptophan 132 form a helical; Signal-anchor for type II membrane protein membrane-spanning segment. Topologically, residues tryptophan 133–glutamine 337 are periplasmic. The span at threonine 145–asparagine 167 shows a compositional bias: polar residues. The segment at threonine 145–alanine 236 is disordered. Low complexity predominate over residues threonine 168–glutamine 207. Positions asparagine 208–valine 218 are enriched in polar residues. The segment covering aspartate 219–alanine 236 has biased composition (low complexity).

Belongs to the RodZ family.

The protein resides in the cell inner membrane. Cytoskeletal protein that is involved in cell-shape control through regulation of the length of the long axis. This is Cytoskeleton protein RodZ from Escherichia coli O9:H4 (strain HS).